The following is a 410-amino-acid chain: 3-phosphoshikimate 1-carboxyvinyltransferase (410 aa).

Residues lysine 21, serine 22, and arginine 26 each contribute to the 3-phosphoshikimate site. Lysine 21 lines the phosphoenolpyruvate pocket. 2 residues coordinate phosphoenolpyruvate: glycine 69 and arginine 97. 3-phosphoshikimate is bound by residues serine 143, serine 144, glutamine 145, serine 171, aspartate 288, and lysine 315. Glutamine 145 is a phosphoenolpyruvate binding site. The Proton acceptor role is filled by aspartate 288. Residues arginine 319, arginine 364, and lysine 389 each coordinate phosphoenolpyruvate.

Belongs to the EPSP synthase family. As to quaternary structure, monomer.

Its subcellular location is the cytoplasm. The catalysed reaction is 3-phosphoshikimate + phosphoenolpyruvate = 5-O-(1-carboxyvinyl)-3-phosphoshikimate + phosphate. The protein operates within metabolic intermediate biosynthesis; chorismate biosynthesis; chorismate from D-erythrose 4-phosphate and phosphoenolpyruvate: step 6/7. Functionally, catalyzes the transfer of the enolpyruvyl moiety of phosphoenolpyruvate (PEP) to the 5-hydroxyl of shikimate-3-phosphate (S3P) to produce enolpyruvyl shikimate-3-phosphate and inorganic phosphate. The protein is 3-phosphoshikimate 1-carboxyvinyltransferase of Bacteroides fragilis (strain ATCC 25285 / DSM 2151 / CCUG 4856 / JCM 11019 / LMG 10263 / NCTC 9343 / Onslow / VPI 2553 / EN-2).